Here is a 1449-residue protein sequence, read N- to C-terminus: MGARNSVLSGKKADELEKIRLRPGGKKRYQLKHIVWAANELDRFGLAESLLENKEGCQKILSVLAPLVPTGSENLKSLYNTVCVLWCIHAEEKVKHTEEAKQIVQRHLVVETGTADKMPATSRPTAPPSGKGGNYPVQQIGGNYTHLPLSPRTLNAWVKLIEEKKFGAEVVPGFQALSEGCTPYDINQMLNCVGEHQAAMQIIREIINEEAADWDLQHPQPGPIPPGQLREPRGSDIAGTTSTVDEQIQWMYRQQNPIPVGNIYRRWIQLGLQKCVRMYNPTNILDVKQGPKEPFQSYVDRFYKSLRAEQTDPAVKNWMTQTLLIQNANPDCKLVLKGLGINPTLEEMLTACQGVGGPGQKARLMAEALKDALTQGPLPFAAVQQKGQRKIIKCWNCGKEGHSARQCRAPRRQGCWKCGKAGHVMAKCPERQAGFFRAWPMGKEAPQFPHGPDASGADTNCSPRGSSCGSTEELHEDGQKAEGEQRETLQGGNGGFAAPQFSLWRRPIVTAYIEEQPVEVLLDTGADDSIVAGIELGPNYTPKIVGGIGGFINTKEYKDVKIKVLGKVIKGTIMTGDTPINIFGRNLLTAMGMSLNLPIAKVEPIKVTLKPGKDGPKLRQWPLSKEKIIALREICEKMEKDGQLEEAPPTNPYNTPTFAIKKKDKNKWRMLIDFRELNKVTQDFTEVQLGIPHPAGLAKRRRITVLDVGDAYFSIPLDEEFRQYTAFTLPSVNNAEPGKRYIYKVLPQGWKGSPAIFQHTMRNVLEPFRKANPDVTLIQYMDDILIASDRTDLEHDRVVLQLKELLNSIGFSTPEEKFQKDPPFQWMGYELWPTKWKLQKIELPQRETWTVNDIQKLVGVLNWAAQIYPGIKTKHLCRLIRGKMTLTEEVQWTEMAEAEYEENKIILSQEQEGCYYQEGKPLEATVIKSQDNQWSYKIHQEDKILKVGKFAKIKNTHTNGVRLLAHVVQKIGKEAIVIWGQVPRFHLPVEREIWEQWWTDYWQVTWIPEWDFVSTPPLVRLVFNLVKEPIQGAETFYVDGSCNRQSREGKAGYVTDRGRDKAKLLEQTTNQQAELEAFYLALADSGPKANIIVDSQYVMGIVAGQPTESESRLVNQIIEEMIKKEAIYVAWVPAHKGIGGNQEVDHLVSQGIRQVLFLEKIEPAQEEHEKYHSNVKELVFKFGLPRLVAKQIVDTCDKCHQKGEAIHGQVNAELGTWQMDCTHLEGKIIIVAVHVASGFIEAEVIPQETGRQTALFLLKLASRWPITHLHTDNGANFTSQEVKMVAWWAGIEQTFGVPYNPQSQGVVEAMNHHLKTQIDRIREQANSIETIVLMAVHCMNFKRRGGIGDMTPAERLVNMITTEQEIQFQQSKNSKFKNFRVYYREGRDQLWKGPGELLWKGEGAVILKVGTEIKVVPRRKAKIIKDYGGGKELDSGSHLEDTGEAREVA.

Glycine 2 is lipidated: N-myristoyl glycine; by host. A Nuclear export signal motif is present at residues 16–22; it reads LEKIRLR. A Nuclear localization signal motif is present at residues 26 to 32; that stretch reads KKRYQLK. 2 CCHC-type zinc fingers span residues 392-409 and 413-430; these read IKCW…QCRA and QGCW…KCPE. The tract at residues 442–494 is disordered; that stretch reads GKEAPQFPHGPDASGADTNCSPRGSSCGSTEELHEDGQKAEGEQRETLQGGNG. A compositionally biased stretch (polar residues) spans 457-470; the sequence is ADTNCSPRGSSCGS. A compositionally biased stretch (basic and acidic residues) spans 472 to 487; that stretch reads EELHEDGQKAEGEQRE. The Peptidase A2 domain occupies 518-587; that stretch reads VEVLLDTGAD…TPINIFGRNL (70 aa). Aspartate 523 functions as the For protease activity; shared with dimeric partner in the catalytic mechanism. Residues 641–831 form the Reverse transcriptase domain; that stretch reads DGQLEEAPPT…PPFQWMGYEL (191 aa). Mg(2+) contacts are provided by aspartate 707, aspartate 782, and aspartate 783. The RT 'primer grip' stretch occupies residues 824–832; the sequence is FQWMGYELW. Positions 994-1010 match the Tryptophan repeat motif motif; it reads WEQWWTDYWQVTWIPEW. The 124-residue stretch at 1030–1153 folds into the RNase H type-1 domain; that stretch reads IQGAETFYVD…VDHLVSQGIR (124 aa). Residues aspartate 1039, glutamate 1074, aspartate 1094, and aspartate 1145 each coordinate Mg(2+). The segment at 1159–1200 adopts an Integrase-type zinc-finger fold; that stretch reads EKIEPAQEEHEKYHSNVKELVFKFGLPRLVAKQIVDTCDKCH. Zn(2+)-binding residues include histidine 1168, histidine 1172, cysteine 1196, and cysteine 1199. The region spanning 1210-1360 is the Integrase catalytic domain; that stretch reads VNAELGTWQM…TPAERLVNMI (151 aa). Aspartate 1220 and aspartate 1272 together coordinate Mg(2+). The integrase-type DNA-binding region spans 1379–1426; it reads FRVYYREGRDQLWKGPGELLWKGEGAVILKVGTEIKVVPRRKAKIIKD.

In terms of assembly, homotrimer. Interacts with gp41 (via C-terminus). Homodimer. The active site consists of two apposed aspartic acid residues. As to quaternary structure, heterodimer of p66 RT and p51 RT (RT p66/p51). Heterodimerization of RT is essential for DNA polymerase activity. Despite the sequence identities, p66 RT and p51 RT have distinct folding. In terms of assembly, homotetramer; may further associate as a homohexadecamer. It depends on Mg(2+) as a cofactor. Specific enzymatic cleavages by the viral protease yield mature proteins. The protease is released by autocatalytic cleavage. The polyprotein is cleaved during and after budding, this process is termed maturation. Proteolytic cleavage of p66 RT removes the RNase H domain to yield the p51 RT subunit. In terms of processing, capsid protein p24 is phosphorylated.

It localises to the virion. The protein resides in the host nucleus. Its subcellular location is the host cytoplasm. It is found in the host cell membrane. The catalysed reaction is Specific for a P1 residue that is hydrophobic, and P1' variable, but often Pro.. It catalyses the reaction Endohydrolysis of RNA in RNA/DNA hybrids. Three different cleavage modes: 1. sequence-specific internal cleavage of RNA. Human immunodeficiency virus type 1 and Moloney murine leukemia virus enzymes prefer to cleave the RNA strand one nucleotide away from the RNA-DNA junction. 2. RNA 5'-end directed cleavage 13-19 nucleotides from the RNA end. 3. DNA 3'-end directed cleavage 15-20 nucleotides away from the primer terminus.. The enzyme catalyses 3'-end directed exonucleolytic cleavage of viral RNA-DNA hybrid.. It carries out the reaction DNA(n) + a 2'-deoxyribonucleoside 5'-triphosphate = DNA(n+1) + diphosphate. Its activity is regulated as follows. The viral protease is inhibited by many synthetic protease inhibitors (PIs), such as amprenavir, atazanavir, indinavir, loprinavir, nelfinavir, ritonavir and saquinavir. RT can be inhibited either by nucleoside RT inhibitors (NRTIs) or by non nucleoside RT inhibitors (NNRTIs). NRTIs act as chain terminators, whereas NNRTIs inhibit DNA polymerization by binding a small hydrophobic pocket near the RT active site and inducing an allosteric change in this region. Classical NRTIs are abacavir, adefovir (PMEA), didanosine (ddI), lamivudine (3TC), stavudine (d4T), tenofovir (PMPA), zalcitabine (ddC), and zidovudine (AZT). Classical NNRTIs are atevirdine (BHAP U-87201E), delavirdine, efavirenz (DMP-266), emivirine (I-EBU), and nevirapine (BI-RG-587). The tritherapies used as a basic effective treatment of AIDS associate two NRTIs and one NNRTI. Use of protease inhibitors in tritherapy regimens permit more ambitious therapeutic strategies. In terms of biological role, gag-Pol polyprotein and Gag polyprotein may regulate their own translation, by the binding genomic RNA in the 5'-UTR. At low concentration, Gag-Pol and Gag would promote translation, whereas at high concentration, the polyproteins encapsidate genomic RNA and then shut off translation. Functionally, matrix protein p17 has two main functions: in infected cell, it targets Gag and Gag-pol polyproteins to the plasma membrane via a multipartite membrane-binding signal, that includes its myristointegration complex. The myristoylation signal and the NLS exert conflicting influences its subcellular localization. The key regulation of these motifs might be phosphorylation of a portion of MA molecules on the C-terminal tyrosine at the time of virus maturation, by virion-associated cellular tyrosine kinase. Implicated in the release from host cell mediated by Vpu. Capsid protein p24 forms the conical core that encapsulates the genomic RNA-nucleocapsid complex in the virion. The core is constituted by capsid protein hexamer subunits. The core is disassembled soon after virion entry. Interaction with host PPIA/CYPA protects the virus from restriction by host TRIM5-alpha and from an unknown antiviral activity in host cells. This capsid restriction by TRIM5 is one of the factors which restricts SIV to the simian species. Its function is as follows. Nucleocapsid protein p7 encapsulates and protects viral dimeric unspliced (genomic) RNA. Binds these RNAs through its zinc fingers. Facilitates rearangement of nucleic acid secondary structure during retrotranscription of genomic RNA. This capability is referred to as nucleic acid chaperone activity. In terms of biological role, the aspartyl protease mediates proteolytic cleavages of Gag and Gag-Pol polyproteins during or shortly after the release of the virion from the plasma membrane. Cleavages take place as an ordered, step-wise cascade to yield mature proteins. This process is called maturation. Displays maximal activity during the budding process just prior to particle release from the cell. Also cleaves Nef and Vif, probably concomitantly with viral structural proteins on maturation of virus particles. Hydrolyzes host EIF4GI and PABP1 in order to shut off the capped cellular mRNA translation. The resulting inhibition of cellular protein synthesis serves to ensure maximal viral gene expression and to evade host immune response. Functionally, reverse transcriptase/ribonuclease H (RT) is a multifunctional enzyme that converts the viral dimeric RNA genome into dsDNA in the cytoplasm, shortly after virus entry into the cell. This enzyme displays a DNA polymerase activity that can copy either DNA or RNA templates, and a ribonuclease H (RNase H) activity that cleaves the RNA strand of RNA-DNA heteroduplexes in a partially processive 3' to 5' endonucleasic mode. Conversion of viral genomic RNA into dsDNA requires many steps. A tRNA binds to the primer-binding site (PBS) situated at the 5'-end of the viral RNA. RT uses the 3' end of the tRNA primer to perform a short round of RNA-dependent minus-strand DNA synthesis. The reading proceeds through the U5 region and ends after the repeated (R) region which is present at both ends of viral RNA. The portion of the RNA-DNA heteroduplex is digested by the RNase H, resulting in a ssDNA product attached to the tRNA primer. This ssDNA/tRNA hybridizes with the identical R region situated at the 3' end of viral RNA. This template exchange, known as minus-strand DNA strong stop transfer, can be either intra- or intermolecular. RT uses the 3' end of this newly synthesized short ssDNA to perform the RNA-dependent minus-strand DNA synthesis of the whole template. RNase H digests the RNA template except for two polypurine tracts (PPTs) situated at the 5'-end and near the center of the genome. It is not clear if both polymerase and RNase H activities are simultaneous. RNase H can probably proceed both in a polymerase-dependent (RNA cut into small fragments by the same RT performing DNA synthesis) and a polymerase-independent mode (cleavage of remaining RNA fragments by free RTs). Secondly, RT performs DNA-directed plus-strand DNA synthesis using the PPTs that have not been removed by RNase H as primers. PPTs and tRNA primers are then removed by RNase H. The 3' and 5' ssDNA PBS regions hybridize to form a circular dsDNA intermediate. Strand displacement synthesis by RT to the PBS and PPT ends produces a blunt ended, linear dsDNA copy of the viral genome that includes long terminal repeats (LTRs) at both ends. Integrase catalyzes viral DNA integration into the host chromosome, by performing a series of DNA cutting and joining reactions. This enzyme activity takes place after virion entry into a cell and reverse transcription of the RNA genome in dsDNA. The first step in the integration process is 3' processing. This step requires a complex comprising the viral genome, matrix protein, Vpr and integrase. This complex is called the pre-integration complex (PIC). The integrase protein removes 2 nucleotides from each 3' end of the viral DNA, leaving recessed CA OH's at the 3' ends. In the second step, the PIC enters cell nucleus. This process is mediated through integrase and Vpr proteins, and allows the virus to infect a non dividing cell. This ability to enter the nucleus is specific of lentiviruses, other retroviruses cannot and rely on cell division to access cell chromosomes. In the third step, termed strand transfer, the integrase protein joins the previously processed 3' ends to the 5' ends of strands of target cellular DNA at the site of integration. The 5'-ends are produced by integrase-catalyzed staggered cuts, 5 bp apart. A Y-shaped, gapped, recombination intermediate results, with the 5'-ends of the viral DNA strands and the 3' ends of target DNA strands remaining unjoined, flanking a gap of 5 bp. The last step is viral DNA integration into host chromosome. This involves host DNA repair synthesis in which the 5 bp gaps between the unjoined strands are filled in and then ligated. Since this process occurs at both cuts flanking the SIV genome, a 5 bp duplication of host DNA is produced at the ends of SIV integration. Alternatively, Integrase may catalyze the excision of viral DNA just after strand transfer, this is termed disintegration. In Cercopithecidae (Old World monkeys), this protein is Gag-Pol polyprotein (gag-pol).